Consider the following 298-residue polypeptide: Acetylglutamate kinase (298 aa).

Residues 69 to 70, Arg-91, and Asn-196 contribute to the substrate site; that span reads GG.

This sequence belongs to the acetylglutamate kinase family. ArgB subfamily.

Its subcellular location is the cytoplasm. It catalyses the reaction N-acetyl-L-glutamate + ATP = N-acetyl-L-glutamyl 5-phosphate + ADP. It functions in the pathway amino-acid biosynthesis; L-arginine biosynthesis; N(2)-acetyl-L-ornithine from L-glutamate: step 2/4. Its function is as follows. Catalyzes the ATP-dependent phosphorylation of N-acetyl-L-glutamate. The protein is Acetylglutamate kinase of Nitrobacter hamburgensis (strain DSM 10229 / NCIMB 13809 / X14).